Reading from the N-terminus, the 356-residue chain is sn-glycerol-3-phosphate import ATP-binding protein UgpC (356 aa).

One can recognise an ABC transporter domain in the interval 4–235 (LKLQAVTKSW…PASLFVASFI (232 aa)). 37–44 (GPSGCGKS) is an ATP binding site.

It belongs to the ABC transporter superfamily. sn-glycerol-3-phosphate importer (TC 3.A.1.1.3) family. In terms of assembly, the complex is composed of two ATP-binding proteins (UgpC), two transmembrane proteins (UgpA and UgpE) and a solute-binding protein (UgpB).

The protein localises to the cell inner membrane. It carries out the reaction sn-glycerol 3-phosphate(out) + ATP + H2O = sn-glycerol 3-phosphate(in) + ADP + phosphate + H(+). The enzyme catalyses glycerol 2-phosphate(out) + ATP + H2O = glycerol 2-phosphate(in) + ADP + phosphate + H(+). ATPase activity is stimulated when UgpB is bound to G3P. Transport is inhibited in vivo by increasing levels of internal phosphate. However, ATPase activity in proteoliposomes is neither inhibited by phosphate nor by the signal transducing protein PhoU or the phosphodiesterase UgpQ. Activated by gluconate and inhibited by fumarate. Part of the ABC transporter complex UgpBAEC involved in sn-glycerol-3-phosphate (G3P) import. Responsible for energy coupling to the transport system. Can also transport glycerophosphoryl diesters, which are hydrolyzed to G3P and alcohol during transport. The G3P moiety can be detected in the cytoplasm whereas the corresponding alcohol is usually found in the culture medium. It was proposed by Yang et al that the complex could also transport glycerol-2-phosphate (G2P) in vivo, but it was shown later by Wuttge et al that UgpB does not bind G2P, questioning this transport activity. G2P might be converted in the periplasm to G3P before its transport. The protein is sn-glycerol-3-phosphate import ATP-binding protein UgpC of Escherichia coli (strain K12).